Reading from the N-terminus, the 460-residue chain is Equilibrative nucleoside transporter 1 (460 aa).

Residues 1–12 (MTTSHQPQDRYK) lie on the Cytoplasmic side of the membrane. Residues 13–29 (AVWLIFFVLGLGTLLPW) traverse the membrane as a helical segment. Topologically, residues 30 to 82 (NFFMTATKYFTNRLDVSQNVSSDTDQSCESTKALADPTVALPARSSLSAIFNN) are extracellular. Residue N48 is glycosylated (N-linked (GlcNAc...) asparagine). Residues 83–107 (VMTLCAMLPLLVFTCLNSFLHQRIS) form a helical membrane-spanning segment. Over 108 to 111 (QSVR) the chain is Cytoplasmic. Residues 112–130 (ILGSLLAILLVFLVTAALV) traverse the membrane as a helical segment. Residues 131–138 (KVEMDALI) lie on the Extracellular side of the membrane. A helical transmembrane segment spans residues 139–157 (FFVITMIKIVLINSFGAIL). Topologically, residues 158–174 (QASLFGLAGVLPANYTA) are cytoplasmic. A helical membrane pass occupies residues 175–199 (PIMSGQGLAGFFTSVAMICAIASGS). Residues 200-206 (ELSESAF) are Extracellular-facing. The chain crosses the membrane as a helical span at residues 207-227 (GYFITACAVVILAILCYLALP). The Cytoplasmic segment spans residues 228–291 (RTEFYRHYLQ…IKAILKSICV (64 aa)). S254 carries the post-translational modification Phosphoserine. A compositionally biased stretch (basic and acidic residues) spans 255–266 (KGEEPKGRREES). A disordered region spans residues 255–277 (KGEEPKGRREESGVPGPNSPPTN). Position 273 is a phosphoserine (S273). A helical transmembrane segment spans residues 292-311 (PALSVCFIFTVTIGLFPAVT). At 312–323 (AEVESSIAGTSP) the chain is on the extracellular side. A helical transmembrane segment spans residues 324 to 342 (WKSYFIPVACFLNFNVFDW). Topologically, residues 343-359 (LGRSLTAVCMWPGQDSR) are cytoplasmic. A helical transmembrane segment spans residues 360 to 378 (WLPVLVASRIVFIPLLMLC). Over 379-397 (NVKARHCGAQRHHFVFKHD) the chain is Extracellular. Residues 398-417 (AWFIAFMAAFAFSNGYLASL) form a helical membrane-spanning segment. At 418–435 (CMCFGPKKVKPAEAETAG) the chain is on the cytoplasmic side. The chain crosses the membrane as a helical span at residues 436–456 (NIMSFFLCLGLALGAVLSFLL). Over 457 to 460 (RALV) the chain is Extracellular.

This sequence belongs to the SLC29A/ENT transporter (TC 2.A.57) family. Identified in a complex with STOM. Post-translationally, glycosylated. As to expression, highly expressed in heart, spleen, lung, liver and testis. Lower level of expression in brain and kidney. Expressed in adipose tissues, brown adipocytes expressing significantly higher amounts than white adipocytes. Expressed in seminiferous tubules.

The protein resides in the basolateral cell membrane. The protein localises to the apical cell membrane. It localises to the cell membrane. It catalyses the reaction adenosine(in) = adenosine(out). It carries out the reaction guanosine(in) = guanosine(out). The catalysed reaction is inosine(in) = inosine(out). The enzyme catalyses uridine(out) = uridine(in). It catalyses the reaction thymidine(in) = thymidine(out). It carries out the reaction cytidine(in) = cytidine(out). The catalysed reaction is adenine(out) = adenine(in). The enzyme catalyses guanine(out) = guanine(in). It catalyses the reaction thymine(out) = thymine(in). It carries out the reaction uracil(in) = uracil(out). The catalysed reaction is hypoxanthine(out) = hypoxanthine(in). Transporter activity is sensitive to low concentrations of the inhibitor nitrobenzylmercaptopurine riboside (NBMPR). Uniporter involved in the facilitative transport of nucleosides and nucleobases, and contributes to maintaining their cellular homeostasis. Functions as a Na(+)-independent transporter. Involved in the transport of nucleosides such as adenosine, guanosine, inosine, uridine, thymidine and cytidine. Also transports purine (hypoxanthine, adenine, guanine) and pyrimidine nucleobases (thymine, uracil). Mediates basolateral nucleoside uptake into Sertoli cells, thereby regulating the transport of nucleosides in testis across the blood-testis-barrier. Regulates inosine levels in brown adipocytes tissues (BAT) and extracellular inosine levels, which controls BAT-dependent energy expenditure. This Mus musculus (Mouse) protein is Equilibrative nucleoside transporter 1.